The primary structure comprises 229 residues: DNA mismatch repair protein MutH (229 aa).

The protein belongs to the MutH family.

The protein localises to the cytoplasm. Sequence-specific endonuclease that cleaves unmethylated GATC sequences. It is involved in DNA mismatch repair. The sequence is that of DNA mismatch repair protein MutH from Escherichia coli (strain SMS-3-5 / SECEC).